Here is a 113-residue protein sequence, read N- to C-terminus: uncharacterized protein (113 aa).

A compositionally biased stretch (basic and acidic residues) spans 1–19; the sequence is MDKKSAHRNPEDAKAGKYE. The disordered stretch occupies residues 1–94; the sequence is MDKKSAHRNP…NKWRGKRKVS (94 aa). A compositionally biased stretch (basic residues) spans 20–41; the sequence is GKHKRKKKRKQNQNQHRSRHRS. The span at 52-66 shows a compositional bias: low complexity; the sequence is FPSSSSSSSGSQTDS. Residues 75–92 show a composition bias toward basic residues; the sequence is KIKKKRREKTNKWRGKRK.

This is an uncharacterized protein from Macaca fascicularis (Crab-eating macaque).